Consider the following 250-residue polypeptide: MAVTKLVLVRHGESQWNNENRFTGWYDVDLSEKGRTEAKAAGKLLKDEGFTFDFAYTSVLKRAIHTLWSILDELDQAWLPTEKTWKLNERHYGALQGLDKSETAAKYGDEQVKLWRRGFAITPPALDKSDERFPGHDPRYAKLTDAELPTTESLALTIDRVIPYWEEVIKPRIASGERVIIAAHGNSLRALVKYLDNLNEEEILELNIPTGVPLVYEFDENFKPIKHYYLGNADEIAAKAAAVANQGKAK.

Residues 10–17, 23–24, Arg62, 89–92, Lys100, 116–117, and 185–186 contribute to the substrate site; these read RHGESQWN, TG, ERHY, RR, and GN. The Tele-phosphohistidine intermediate role is filled by His11. Glu89 acts as the Proton donor/acceptor in catalysis.

Belongs to the phosphoglycerate mutase family. BPG-dependent PGAM subfamily. As to quaternary structure, homodimer.

The catalysed reaction is (2R)-2-phosphoglycerate = (2R)-3-phosphoglycerate. The protein operates within carbohydrate degradation; glycolysis; pyruvate from D-glyceraldehyde 3-phosphate: step 3/5. Catalyzes the interconversion of 2-phosphoglycerate and 3-phosphoglycerate. The chain is 2,3-bisphosphoglycerate-dependent phosphoglycerate mutase from Yersinia enterocolitica serotype O:8 / biotype 1B (strain NCTC 13174 / 8081).